Reading from the N-terminus, the 418-residue chain is Serine--tRNA ligase (418 aa).

232–234 lines the L-serine pocket; sequence TAE. Residues 263 to 265 and Val279 each bind ATP; that span reads RRE. Glu286 contacts L-serine. Position 350–353 (350–353) interacts with ATP; the sequence is EISS. Residue Ser385 coordinates L-serine.

This sequence belongs to the class-II aminoacyl-tRNA synthetase family. Type-1 seryl-tRNA synthetase subfamily. As to quaternary structure, homodimer. The tRNA molecule binds across the dimer.

The protein resides in the cytoplasm. The catalysed reaction is tRNA(Ser) + L-serine + ATP = L-seryl-tRNA(Ser) + AMP + diphosphate + H(+). It carries out the reaction tRNA(Sec) + L-serine + ATP = L-seryl-tRNA(Sec) + AMP + diphosphate + H(+). It functions in the pathway aminoacyl-tRNA biosynthesis; selenocysteinyl-tRNA(Sec) biosynthesis; L-seryl-tRNA(Sec) from L-serine and tRNA(Sec): step 1/1. In terms of biological role, catalyzes the attachment of serine to tRNA(Ser). Is also able to aminoacylate tRNA(Sec) with serine, to form the misacylated tRNA L-seryl-tRNA(Sec), which will be further converted into selenocysteinyl-tRNA(Sec). The protein is Serine--tRNA ligase of Leptospira biflexa serovar Patoc (strain Patoc 1 / Ames).